Reading from the N-terminus, the 208-residue chain is Uracil phosphoribosyltransferase (208 aa).

5-phospho-alpha-D-ribose 1-diphosphate is bound by residues arginine 78, arginine 103, and aspartate 130–threonine 138. Uracil-binding positions include isoleucine 193 and glycine 198–alanine 200. Position 199 (aspartate 199) interacts with 5-phospho-alpha-D-ribose 1-diphosphate.

It belongs to the UPRTase family. It depends on Mg(2+) as a cofactor.

The enzyme catalyses UMP + diphosphate = 5-phospho-alpha-D-ribose 1-diphosphate + uracil. It participates in pyrimidine metabolism; UMP biosynthesis via salvage pathway; UMP from uracil: step 1/1. Its activity is regulated as follows. Allosterically activated by GTP. Functionally, catalyzes the conversion of uracil and 5-phospho-alpha-D-ribose 1-diphosphate (PRPP) to UMP and diphosphate. The chain is Uracil phosphoribosyltransferase from Campylobacter jejuni subsp. jejuni serotype O:2 (strain ATCC 700819 / NCTC 11168).